The sequence spans 59 residues: Large ribosomal subunit protein bL33 (59 aa).

Belongs to the bacterial ribosomal protein bL33 family.

The protein is Large ribosomal subunit protein bL33 of Borreliella afzelii (strain PKo) (Borrelia afzelii).